The chain runs to 637 residues: Chaperone protein HtpG (637 aa).

The a; substrate-binding stretch occupies residues 1–345 (MSHQETHGFQ…SNDLPLNVSR (345 aa)). Residues 346-562 (EILQDNKVTR…EGEMSSQMIK (217 aa)) are b. A c region spans residues 563–637 (LMQAAGQPVP…VNQMLLKSVG (75 aa)).

This sequence belongs to the heat shock protein 90 family. Homodimer.

It localises to the cytoplasm. Molecular chaperone. Has ATPase activity. This Shewanella amazonensis (strain ATCC BAA-1098 / SB2B) protein is Chaperone protein HtpG.